Here is a 225-residue protein sequence, read N- to C-terminus: MNFLLTNDDGIDAPGIEALYEALGKRGVWVAPKNQHSGCGHKVTTDQAIAVEQRGKNRYAVDGTPADCTRLGVVHFYPEVDWVIAGINAGGNMGIDSYLSGTVAAVREAAILGHKAIAISHWINKPRTINWAWASHWANAVFNTLWQQDLPPQHFWNVNLPHWQSGDPEPEVIFCEPSRDPLPVAFTIEGSNFFYRGEYSQRPRQPGSDIDVCFSGNIAITQLRV.

Positions 8, 9, 37, and 88 each coordinate a divalent metal cation.

It belongs to the SurE nucleotidase family. A divalent metal cation is required as a cofactor.

The protein localises to the cytoplasm. The enzyme catalyses a ribonucleoside 5'-phosphate + H2O = a ribonucleoside + phosphate. In terms of biological role, nucleotidase that shows phosphatase activity on nucleoside 5'-monophosphates. The protein is Putative 5'-nucleotidase alr3139 of Synechocystis sp. (strain ATCC 27184 / PCC 6803 / Kazusa).